The chain runs to 264 residues: Small ribosomal subunit protein eS1 (264 aa).

Lys34 carries the N6-acetyllysine; alternate modification. A Glycyl lysine isopeptide (Lys-Gly) (interchain with G-Cter in SUMO2); alternate cross-link involves residue Lys34. Lys56 carries the post-translational modification N6-acetyllysine. Tyr155 carries the ADP-ribosyltyrosine modification. The tract at residues 233–264 (GEGSSSGKATGDETGAKVERADGYEPPVQESV) is disordered. Residues Ser236 and Ser237 each carry the phosphoserine modification. Residues 242–255 (TGDETGAKVERADG) show a composition bias toward basic and acidic residues. Position 249 is an N6-acetyllysine; alternate (Lys249). Residue Lys249 forms a Glycyl lysine isopeptide (Lys-Gly) (interchain with G-Cter in SUMO2); alternate linkage. Phosphotyrosine is present on Tyr256. Phosphoserine is present on Ser263.

This sequence belongs to the eukaryotic ribosomal protein eS1 family. Component of the small ribosomal subunit. Mature ribosomes consist of a small (40S) and a large (60S) subunit. The 40S subunit contains about 33 different proteins and 1 molecule of RNA (18S). The 60S subunit contains about 49 different proteins and 3 molecules of RNA (28S, 5.8S and 5S). Part of the small subunit (SSU) processome, composed of more than 70 proteins and the RNA chaperone small nucleolar RNA (snoRNA) U3. ADP-ribosylated at Tyr-155 by PARP1 in presence of HPF1.

Its subcellular location is the cytoplasm. The protein localises to the nucleus. It localises to the nucleolus. Its function is as follows. Component of the small ribosomal subunit. The ribosome is a large ribonucleoprotein complex responsible for the synthesis of proteins in the cell. Part of the small subunit (SSU) processome, first precursor of the small eukaryotic ribosomal subunit. During the assembly of the SSU processome in the nucleolus, many ribosome biogenesis factors, an RNA chaperone and ribosomal proteins associate with the nascent pre-rRNA and work in concert to generate RNA folding, modifications, rearrangements and cleavage as well as targeted degradation of pre-ribosomal RNA by the RNA exosome. May play a role during erythropoiesis. The protein is Small ribosomal subunit protein eS1 of Callithrix jacchus (White-tufted-ear marmoset).